Reading from the N-terminus, the 211-residue chain is Uridine kinase (211 aa).

ATP is bound at residue 12-19 (GGSGGGKT).

This sequence belongs to the uridine kinase family.

The protein localises to the cytoplasm. It catalyses the reaction uridine + ATP = UMP + ADP + H(+). The enzyme catalyses cytidine + ATP = CMP + ADP + H(+). It participates in pyrimidine metabolism; CTP biosynthesis via salvage pathway; CTP from cytidine: step 1/3. The protein operates within pyrimidine metabolism; UMP biosynthesis via salvage pathway; UMP from uridine: step 1/1. The protein is Uridine kinase of Streptococcus thermophilus (strain CNRZ 1066).